The sequence spans 82 residues: Sulfur carrier protein TusA (82 aa).

Catalysis depends on cysteine 19, which acts as the Cysteine persulfide intermediate.

This sequence belongs to the sulfur carrier protein TusA family.

Its subcellular location is the cytoplasm. In terms of biological role, sulfur carrier protein which probably makes part of a sulfur-relay system. In Tolumonas auensis (strain DSM 9187 / NBRC 110442 / TA 4), this protein is Sulfur carrier protein TusA.